Consider the following 464-residue polypeptide: Soluble pyridine nucleotide transhydrogenase (464 aa).

35–44 (DSRREVGGNC) is a binding site for FAD.

This sequence belongs to the class-I pyridine nucleotide-disulfide oxidoreductase family. FAD is required as a cofactor.

The protein localises to the cytoplasm. The enzyme catalyses NAD(+) + NADPH = NADH + NADP(+). Functionally, conversion of NADPH, generated by peripheral catabolic pathways, to NADH, which can enter the respiratory chain for energy generation. This Pseudomonas syringae pv. tomato (strain ATCC BAA-871 / DC3000) protein is Soluble pyridine nucleotide transhydrogenase.